The primary structure comprises 490 residues: Mitochondria-eating protein (490 aa).

A coiled-coil region spans residues 112-210 (IRELSSVHES…RILRDEVSFL (99 aa)). Low complexity-rich tracts occupy residues 224–241 (SRSPSPLLRRSRSVSPVR) and 456–490 (RSSSPVRSRSGSPSRTFMASHSRSPSPGRLSSSRL). Disordered stretches follow at residues 224 to 253 (SRSPSPLLRRSRSVSPVRGESPTRAQLTSS) and 455 to 490 (SRSSSPVRSRSGSPSRTFMASHSRSPSPGRLSSSRL).

It belongs to the MIEAP family.

The protein localises to the cytoplasm. It localises to the mitochondrion outer membrane. Its subcellular location is the mitochondrion matrix. Functionally, key regulator of mitochondrial quality that mediates the repairing or degradation of unhealthy mitochondria in response to mitochondrial damage. Mediator of mitochondrial protein catabolic process (also named MALM) by mediating the degradation of damaged proteins inside mitochondria by promoting the accumulation in the mitochondrial matrix of hydrolases that are characteristic of the lysosomal lumen. Also involved in mitochondrion degradation of damaged mitochondria by promoting the formation of vacuole-like structures (named MIV), which engulf and degrade unhealthy mitochondria by accumulating lysosomes. Binds cardiolipin. May form molecular condensates (non-membrane-bounded organelles) within mitochondria that compartmentalize and promote cardiolipin metabolism. This chain is Mitochondria-eating protein (spata18), found in Danio rerio (Zebrafish).